The chain runs to 389 residues: 23S rRNA (uracil(747)-C(5))-methyltransferase RlmC (389 aa).

Positions 6, 14, 17, and 92 each coordinate [4Fe-4S] cluster. S-adenosyl-L-methionine is bound by residues Gln217, Phe246, Glu273, and Asn319. Residue Cys346 is the Nucleophile of the active site.

The protein belongs to the class I-like SAM-binding methyltransferase superfamily. RNA M5U methyltransferase family. RlmC subfamily.

The catalysed reaction is uridine(747) in 23S rRNA + S-adenosyl-L-methionine = 5-methyluridine(747) in 23S rRNA + S-adenosyl-L-homocysteine + H(+). Functionally, catalyzes the formation of 5-methyl-uridine at position 747 (m5U747) in 23S rRNA. This chain is 23S rRNA (uracil(747)-C(5))-methyltransferase RlmC, found in Glaesserella parasuis serovar 5 (strain SH0165) (Haemophilus parasuis).